The sequence spans 380 residues: 3-dehydroquinate synthase (380 aa).

NAD(+) contacts are provided by residues 100–104, 124–125, K137, and K146; these read GAASD and TT. 3 residues coordinate Zn(2+): E179, H251, and H267.

This sequence belongs to the sugar phosphate cyclases superfamily. Dehydroquinate synthase family. Requires NAD(+) as cofactor. Co(2+) is required as a cofactor. The cofactor is Zn(2+).

The protein resides in the cytoplasm. The catalysed reaction is 7-phospho-2-dehydro-3-deoxy-D-arabino-heptonate = 3-dehydroquinate + phosphate. It functions in the pathway metabolic intermediate biosynthesis; chorismate biosynthesis; chorismate from D-erythrose 4-phosphate and phosphoenolpyruvate: step 2/7. Its function is as follows. Catalyzes the conversion of 3-deoxy-D-arabino-heptulosonate 7-phosphate (DAHP) to dehydroquinate (DHQ). In Tropheryma whipplei (strain TW08/27) (Whipple's bacillus), this protein is 3-dehydroquinate synthase.